The primary structure comprises 626 residues: ATP-dependent zinc metalloprotease FtsH (626 aa).

Topologically, residues 1–7 (MNGNRPN) are cytoplasmic. The chain crosses the membrane as a helical span at residues 8 to 28 (YISLIFAALVILSLFWLVRSF). Over 29–108 (YFDTSAPSKM…VTGEKGVSSS (80 aa)) the chain is Periplasmic. The chain crosses the membrane as a helical span at residues 109 to 129 (FWVNVIGNVIFIGFLLFMFFF). Residues 130–626 (MMRTISGRNN…RAAAGSEQDS (497 aa)) lie on the Cytoplasmic side of the membrane. 202–209 (GPPGTGKT) serves as a coordination point for ATP. Residue H424 participates in Zn(2+) binding. E425 is a catalytic residue. Zn(2+) is bound by residues H428 and D501.

It in the central section; belongs to the AAA ATPase family. In the C-terminal section; belongs to the peptidase M41 family. In terms of assembly, homohexamer. It depends on Zn(2+) as a cofactor.

Its subcellular location is the cell inner membrane. Acts as a processive, ATP-dependent zinc metallopeptidase for both cytoplasmic and membrane proteins. Plays a role in the quality control of integral membrane proteins. In Pseudothermotoga lettingae (strain ATCC BAA-301 / DSM 14385 / NBRC 107922 / TMO) (Thermotoga lettingae), this protein is ATP-dependent zinc metalloprotease FtsH.